Consider the following 550-residue polypeptide: Membrane-bound alkaline phosphatase (550 aa).

The first 39 residues, 1-39 (MSTWWLVVVAAAAAAGLVRAEDRYHPERLAAGEASAATR), serve as a signal peptide directing secretion. D83 serves as a coordination point for Mg(2+). D83 lines the Zn(2+) pocket. S133 functions as the Phosphoserine intermediate in the catalytic mechanism. Residues H196, S198, and E356 each coordinate Mg(2+). Zn(2+)-binding residues include D361, H365, D402, H403, and H479. A lipid anchor (GPI-anchor amidated serine) is attached at S524. Positions 525–550 (AATVPTAALLSLLLAAFITLRHQCFL) are cleaved as a propeptide — removed in mature form.

The protein belongs to the alkaline phosphatase family. It depends on Mg(2+) as a cofactor. Zn(2+) serves as cofactor. Midgut.

Its subcellular location is the cell membrane. The catalysed reaction is a phosphate monoester + H2O = an alcohol + phosphate. The protein is Membrane-bound alkaline phosphatase (Alp-m) of Bombyx mori (Silk moth).